Here is a 2290-residue protein sequence, read N- to C-terminus: Protein Ycf2 (2290 aa).

1644–1651 (GSIGTGRS) is a binding site for ATP.

This sequence belongs to the Ycf2 family.

The protein resides in the plastid. The protein localises to the chloroplast stroma. Functionally, probable ATPase of unknown function. Its presence in a non-photosynthetic plant (Epifagus virginiana) and experiments in tobacco indicate that it has an essential function which is probably not related to photosynthesis. In Nasturtium officinale (Watercress), this protein is Protein Ycf2.